The primary structure comprises 337 residues: Diacylglycerol O-acyltransferase 2-like protein 6 (337 aa).

A run of 2 helical transmembrane segments spans residues 22–42 (IPVYVLLGTLSILGMPYLLLF) and 102–122 (YIILSHPHGILSYGAFINFAT).

This sequence belongs to the diacylglycerol acyltransferase family.

The protein resides in the endoplasmic reticulum membrane. It catalyses the reaction 1,2-di-(9Z-octadecenoyl)-sn-glycerol + (9Z)-octadecenoyl-CoA = 1,2,3-tri-(9Z-octadecenoyl)-glycerol + CoA. In terms of biological role, diglyceride acyltransferase that uses fatty acyl-CoA as substrate. Particularly active with oleate as a substrate. Has no wax synthase activity to produce wax esters. In Mus musculus (Mouse), this protein is Diacylglycerol O-acyltransferase 2-like protein 6 (Dgat2l6).